A 67-amino-acid chain; its full sequence is Large ribosomal subunit protein eL24 (67 aa).

Residues cysteine 7, cysteine 10, cysteine 33, and cysteine 37 each coordinate Zn(2+). The segment at 7–37 (CDYCGTDIEPGTGTMFVHKDGATTHFCSSKC) adopts a C4-type zinc-finger fold. Positions 48 to 60 (RNLEWTDTARGEA) are enriched in basic and acidic residues. The segment at 48-67 (RNLEWTDTARGEAGEAEDEA) is disordered.

The protein belongs to the eukaryotic ribosomal protein eL24 family. Part of the 50S ribosomal subunit. Forms a cluster with proteins L3 and L14. The cofactor is Zn(2+).

Binds to the 23S rRNA. In Haloarcula marismortui (strain ATCC 43049 / DSM 3752 / JCM 8966 / VKM B-1809) (Halobacterium marismortui), this protein is Large ribosomal subunit protein eL24 (rpl24e).